The primary structure comprises 199 residues: Putative rhomboid protease YdcA (199 aa).

6 consecutive transmembrane segments (helical) span residues 14–34 (LYPV…FFSL), 65–85 (ILLH…FLFA), 97–117 (FLLV…VTEP), 122–142 (HVGA…MVLF), 147–167 (IGQE…LMSF), and 172–192 (INMM…FLCV). S126 acts as the Nucleophile in catalysis. H177 functions as the Charge relay system in the catalytic mechanism.

Belongs to the peptidase S54 family.

It localises to the cell membrane. In Bacillus subtilis (strain 168), this protein is Putative rhomboid protease YdcA (ydcA).